The chain runs to 297 residues: Trimeric intracellular cation channel type A (297 aa).

Topologically, residues 1 to 18 are lumenal; that stretch reads MDLISSLSLGELALSFSR. A helical membrane pass occupies residues 19–39; that stretch reads VPLFPVFDLSYFIVSIIYLKY. Topologically, residues 40–51 are cytoplasmic; sequence EPGSVELSRRHP. The helical transmembrane segment at 52–72 threads the bilayer; the sequence is VASWLCAMLHCFGSYILADLL. Topologically, residues 73–85 are lumenal; sequence LGEPIIDYFSNSS. Gly74 is a binding site for Ca(2+). Residues 86-106 form a helical membrane-spanning segment; sequence SILLASGVWYLIFFCPLDLFY. Residues 107–143 lie on the Cytoplasmic side of the membrane; it reads KCVCFLPVKLIFVAMKEVVRVRKIAVGIHHAHHYHHG. Lys122 and Arg126 together coordinate a 1,2-diacyl-sn-glycero-3-phospho-(1D-myo-inositol-4,5-bisphosphate). Residues 144–164 form a helical membrane-spanning segment; the sequence is WFIMIATGWVKGSGVALLSNL. Residues 165 to 177 are Lumenal-facing; sequence EQLLRGVWKPETN. Residues 178-198 form a helical membrane-spanning segment; it reads EILHMSFPTKASLYGAILFTL. Over 199–208 the chain is Cytoplasmic; it reads QQTRWLPVSK. A helical transmembrane segment spans residues 209–229; the sequence is ASLIFVFTMFMVSCKVFLTAT. The Lumenal segment spans residues 230 to 233; that stretch reads HSHS. The helical transmembrane segment at 234 to 254 threads the bilayer; that stretch reads SPFDVLEGYICPVLFGATWGG. Topologically, residues 255–297 are cytoplasmic; that stretch reads DHHHDNHGAPHGMGLGTQHSGLPAKAKEELSEGFRKKKTKKAD. The segment at 259–297 is disordered; that stretch reads DNHGAPHGMGLGTQHSGLPAKAKEELSEGFRKKKTKKAD. Residues 279 to 288 show a composition bias toward basic and acidic residues; the sequence is KAKEELSEGF.

This sequence belongs to the TMEM38 family. As to quaternary structure, homotrimer; conformation seems to be controled by binding to diacylglycerol (DAG).

It localises to the sarcoplasmic reticulum membrane. It is found in the nucleus membrane. The enzyme catalyses K(+)(in) = K(+)(out). With respect to regulation, channel activity is activated by a change of voltage within the sarcoplasmic reticulum lumen and blocked by luminal high Ca(2+) levels. In terms of biological role, intracellular monovalent cation channel required for maintenance of rapid intracellular calcium release. Acts as a potassium counter-ion channel that functions in synchronization with calcium release from intracellular stores. Opened by a change of voltage within the sarcoplasmic reticulum lumen. This is Trimeric intracellular cation channel type A from Rattus norvegicus (Rat).